The chain runs to 273 residues: Thiazole synthase (273 aa).

Residue lysine 113 is the Schiff-base intermediate with DXP of the active site. Residues glycine 174, 201–202 (AG), and 223–224 (NT) each bind 1-deoxy-D-xylulose 5-phosphate.

The protein belongs to the ThiG family. Homotetramer. Forms heterodimers with either ThiH or ThiS.

It localises to the cytoplasm. It catalyses the reaction [ThiS sulfur-carrier protein]-C-terminal-Gly-aminoethanethioate + 2-iminoacetate + 1-deoxy-D-xylulose 5-phosphate = [ThiS sulfur-carrier protein]-C-terminal Gly-Gly + 2-[(2R,5Z)-2-carboxy-4-methylthiazol-5(2H)-ylidene]ethyl phosphate + 2 H2O + H(+). It participates in cofactor biosynthesis; thiamine diphosphate biosynthesis. Functionally, catalyzes the rearrangement of 1-deoxy-D-xylulose 5-phosphate (DXP) to produce the thiazole phosphate moiety of thiamine. Sulfur is provided by the thiocarboxylate moiety of the carrier protein ThiS. In vitro, sulfur can be provided by H(2)S. The polypeptide is Thiazole synthase (Salinibacter ruber (strain DSM 13855 / M31)).